We begin with the raw amino-acid sequence, 65 residues long: Probable movement protein p8 (65 aa).

Positions 1-10 (MENTENVRSG) are enriched in polar residues. Positions 1-47 (MENTENVRSGRNQREYSKERQQEGGYKEVSKAAVRKEGDVKQDMGPS) are disordered. Positions 12 to 42 (NQREYSKERQQEGGYKEVSKAAVRKEGDVKQ) are enriched in basic and acidic residues.

It belongs to the carmovirus/necrovirus/panicovirus movement protein p8 family.

In terms of biological role, cell-to-cell movement. The sequence is that of Probable movement protein p8 from Tobacco necrosis virus (strain D) (TNV-D).